A 252-amino-acid polypeptide reads, in one-letter code: MLEIKSIPAFNDNYIWLIQNSDKRCAVVDPGDAKPVLEYLQANELTLEAILITHHHNDHIGGVSDLVRAFPHVSVVGPKAEPIPTLTNAMEEGDKLELFGEIFMVLGLPGHTLGHIGYVGDGKLFCGDVLFSAGCGRIFEGTPEQMFESLSKIMKLPEETEVFCAHEYTASNVAFALAVEPDNEHLRQYRDDVNRLRGLNIPTIPTTLRKEKLINPFLRATNAEVIQSVTNRIENSDPCSVFTALREWKNEF.

Zn(2+) contacts are provided by His54, His56, Asp58, His59, His111, Asp128, and His166.

Belongs to the metallo-beta-lactamase superfamily. Glyoxalase II family. Monomer. Zn(2+) is required as a cofactor.

It catalyses the reaction an S-(2-hydroxyacyl)glutathione + H2O = a 2-hydroxy carboxylate + glutathione + H(+). It functions in the pathway secondary metabolite metabolism; methylglyoxal degradation; (R)-lactate from methylglyoxal: step 2/2. Functionally, thiolesterase that catalyzes the hydrolysis of S-D-lactoyl-glutathione to form glutathione and D-lactic acid. The protein is Hydroxyacylglutathione hydrolase of Vibrio campbellii (strain ATCC BAA-1116).